A 949-amino-acid chain; its full sequence is Bifunctional uridylyltransferase/uridylyl-removing enzyme (949 aa).

The tract at residues 1–37 (MKETSFWGETPSLSFADDTDKPLSDRTASPPCDPASS) is disordered. The tract at residues 1-395 (MKETSFWGET…TTGEPPKVVP (395 aa)) is uridylyltransferase. Residues 396–756 (GPEEFQTIAG…AYPIPERGVT (361 aa)) form a uridylyl-removing region. Residues 516–632 (VDEHIVEAVR…LDLADTIQSP (117 aa)) form the HD domain. ACT domains follow at residues 757–834 (ELTV…LDIR) and 870–949 (VIEV…TPAS).

The protein belongs to the GlnD family. Mg(2+) serves as cofactor.

The catalysed reaction is [protein-PII]-L-tyrosine + UTP = [protein-PII]-uridylyl-L-tyrosine + diphosphate. It carries out the reaction [protein-PII]-uridylyl-L-tyrosine + H2O = [protein-PII]-L-tyrosine + UMP + H(+). Uridylyltransferase (UTase) activity is inhibited by glutamine, while glutamine activates uridylyl-removing (UR) activity. Its function is as follows. Modifies, by uridylylation and deuridylylation, the PII regulatory proteins (GlnB and homologs), in response to the nitrogen status of the cell that GlnD senses through the glutamine level. Under low glutamine levels, catalyzes the conversion of the PII proteins and UTP to PII-UMP and PPi, while under higher glutamine levels, GlnD hydrolyzes PII-UMP to PII and UMP (deuridylylation). Thus, controls uridylylation state and activity of the PII proteins, and plays an important role in the regulation of nitrogen assimilation and metabolism. The sequence is that of Bifunctional uridylyltransferase/uridylyl-removing enzyme from Gluconobacter oxydans (strain 621H) (Gluconobacter suboxydans).